The primary structure comprises 74 residues: uncharacterized protein (74 aa).

A signal peptide spans M1–A25.

This is an uncharacterized protein from Archaeoglobus fulgidus (strain ATCC 49558 / DSM 4304 / JCM 9628 / NBRC 100126 / VC-16).